We begin with the raw amino-acid sequence, 274 residues long: Orotidine 5'-phosphate decarboxylase (274 aa).

Lysine 95 functions as the Proton donor in the catalytic mechanism.

It belongs to the OMP decarboxylase family. Type 2 subfamily.

The catalysed reaction is orotidine 5'-phosphate + H(+) = UMP + CO2. It functions in the pathway pyrimidine metabolism; UMP biosynthesis via de novo pathway; UMP from orotate: step 2/2. This is Orotidine 5'-phosphate decarboxylase from Paracidovorax citrulli (strain AAC00-1) (Acidovorax citrulli).